The sequence spans 317 residues: Acetyl-coenzyme A carboxylase carboxyl transferase subunit alpha (317 aa).

The region spanning 38–292 is the CoA carboxyltransferase C-terminal domain; it reads TLEERLARLE…DNIIKQSLVE (255 aa).

Belongs to the AccA family. Acetyl-CoA carboxylase is a heterohexamer composed of biotin carboxyl carrier protein (AccB), biotin carboxylase (AccC) and two subunits each of ACCase subunit alpha (AccA) and ACCase subunit beta (AccD).

The protein resides in the cytoplasm. It catalyses the reaction N(6)-carboxybiotinyl-L-lysyl-[protein] + acetyl-CoA = N(6)-biotinyl-L-lysyl-[protein] + malonyl-CoA. Its pathway is lipid metabolism; malonyl-CoA biosynthesis; malonyl-CoA from acetyl-CoA: step 1/1. Its function is as follows. Component of the acetyl coenzyme A carboxylase (ACC) complex. First, biotin carboxylase catalyzes the carboxylation of biotin on its carrier protein (BCCP) and then the CO(2) group is transferred by the carboxyltransferase to acetyl-CoA to form malonyl-CoA. In Oceanobacillus iheyensis (strain DSM 14371 / CIP 107618 / JCM 11309 / KCTC 3954 / HTE831), this protein is Acetyl-coenzyme A carboxylase carboxyl transferase subunit alpha.